A 274-amino-acid chain; its full sequence is Pantothenate synthetase (274 aa).

Position 27–34 (27–34) interacts with ATP; the sequence is MGALHKGH. The Proton donor role is filled by His34. Gln58 is a (R)-pantoate binding site. Gln58 contacts beta-alanine. 145–148 is an ATP binding site; sequence GQKD. Gln151 contacts (R)-pantoate. ATP is bound at residue 182–185; it reads LSSR.

It belongs to the pantothenate synthetase family. In terms of assembly, homodimer.

The protein localises to the cytoplasm. It catalyses the reaction (R)-pantoate + beta-alanine + ATP = (R)-pantothenate + AMP + diphosphate + H(+). Its pathway is cofactor biosynthesis; (R)-pantothenate biosynthesis; (R)-pantothenate from (R)-pantoate and beta-alanine: step 1/1. Catalyzes the condensation of pantoate with beta-alanine in an ATP-dependent reaction via a pantoyl-adenylate intermediate. This Wolinella succinogenes (strain ATCC 29543 / DSM 1740 / CCUG 13145 / JCM 31913 / LMG 7466 / NCTC 11488 / FDC 602W) (Vibrio succinogenes) protein is Pantothenate synthetase.